We begin with the raw amino-acid sequence, 364 residues long: NAC transcription factor 56 (364 aa).

Residues 1–23 form a disordered region; that stretch reads MESTDSSGGPPPPQPNLPPGFRF. Positions 9-18 are enriched in pro residues; it reads GPPPPQPNLP. Residues 17–178 enclose the NAC domain; sequence LPPGFRFHPT…DWVLCRIYKK (162 aa). A DNA-binding region spans residues 116 to 184; sequence VGVKKALVFY…IYKKNNASRH (69 aa).

As to expression, stamen specific, in anthers from stage 8. Expressed in the outer integument, but seems not expressed in the embryo at the torpedo stage.

The protein localises to the nucleus. Transcription factor of the NAC family. Together with NAC018/NARS2, regulates embryogenesis by regulating the development and degeneration of ovule integuments, a process required for intertissue communication between the embryo and the maternal integument. This Arabidopsis thaliana (Mouse-ear cress) protein is NAC transcription factor 56.